We begin with the raw amino-acid sequence, 466 residues long: MAKTLYNKLMDAHIIRENISTALIYIDRHLIHEVTSPQAFEGLSIANRKLWRKSTNLAVPDHNVPTTNRSSGVSSISDPISRIQIETLGRNCELFGIDEISMNDTRQGIVHIIGPEQGATFPGMSIVCGDSHTSTHGALGALAFGIGTSEVEHVLATNCLWQSKSKNFNIEVNGSLNQHVSAKDIALYIIGQLGTAGGMGFAIEFSGNTIQNLSIEGRMTLCNMAIEAGARIGMVAVDEKTINYVKDRPLAPSGIKWRKAVKYWRTLHSDKNAHFDKTMHFDAKDIKPQVTWGTSPDMVVATDGYVPNPNNAKNQTEKISWKNALNYMHLNANTKISDIKIDKIFIGSCTNSRIEDLRIAADILKDKKIANNIKLALVVPGSGIIKKQAEEEELDKIFINSGFEWREAGCSMCLAMNADKLEVGERCASTSNRNFEGRQGQGSFTHLVSPAIAASSAIAGYLSEVK.

Positions 349, 410, and 413 each coordinate [4Fe-4S] cluster.

This sequence belongs to the aconitase/IPM isomerase family. LeuC type 1 subfamily. As to quaternary structure, heterodimer of LeuC and LeuD. [4Fe-4S] cluster is required as a cofactor.

The enzyme catalyses (2R,3S)-3-isopropylmalate = (2S)-2-isopropylmalate. The protein operates within amino-acid biosynthesis; L-leucine biosynthesis; L-leucine from 3-methyl-2-oxobutanoate: step 2/4. In terms of biological role, catalyzes the isomerization between 2-isopropylmalate and 3-isopropylmalate, via the formation of 2-isopropylmaleate. This chain is 3-isopropylmalate dehydratase large subunit, found in Vesicomyosocius okutanii subsp. Calyptogena okutanii (strain HA).